The following is a 664-amino-acid chain: Protein cueball (664 aa).

An N-terminal signal peptide occupies residues 1-21 (MRNLGIAVTFAVLLVIGYVTA). Residues 22–552 (LEWDAVVTTD…VTYCKNSFNR (531 aa)) lie on the Extracellular side of the membrane. Asn40, Asn140, and Asn188 each carry an N-linked (GlcNAc...) asparagine glycan. 3 LDL-receptor class B repeats span residues 115 to 157 (RKLY…ENHD), 168 to 211 (RHLY…DHYN), and 212 to 257 (NRIY…NSQY). 3 consecutive EGF-like domains span residues 367-399 (EIPICNNFCVHGECVVGADSRPMCKCHAEFEGE), 402-438 (DRNICDGYCLNNGRCALSATGQRSCTCSKNFSGARCE), and 473-510 (EEYTCNNYCLHDGTCILNNDTMLVECRCGSEYTGKRCE). 8 cysteine pairs are disulfide-bonded: Cys371-Cys380, Cys375-Cys390, Cys406-Cys416, Cys410-Cys426, Cys428-Cys437, Cys477-Cys487, Cys481-Cys498, and Cys500-Cys509. Asn431 is a glycosylation site (N-linked (GlcNAc...) asparagine). Asn491 carries an N-linked (GlcNAc...) asparagine glycan. An N-linked (GlcNAc...) asparagine glycan is attached at Asn551. Residues 553–573 (TVVYVSLAFTASLVTLVTILC) traverse the membrane as a helical segment. At 574–664 (TVRRMYERNR…KLPSCVAEKN (91 aa)) the chain is on the cytoplasmic side.

Belongs to the cueball family.

It localises to the cell membrane. In terms of biological role, has a role in spermatogenesis and oogenesis. The sequence is that of Protein cueball from Aedes aegypti (Yellowfever mosquito).